Consider the following 185-residue polypeptide: Elongation factor P (185 aa).

The protein belongs to the elongation factor P family.

It localises to the cytoplasm. It participates in protein biosynthesis; polypeptide chain elongation. Its function is as follows. Involved in peptide bond synthesis. Stimulates efficient translation and peptide-bond synthesis on native or reconstituted 70S ribosomes in vitro. Probably functions indirectly by altering the affinity of the ribosome for aminoacyl-tRNA, thus increasing their reactivity as acceptors for peptidyl transferase. The chain is Elongation factor P from Thermosynechococcus vestitus (strain NIES-2133 / IAM M-273 / BP-1).